A 94-amino-acid polypeptide reads, in one-letter code: ATP synthase subunit c (94 aa).

A run of 2 helical transmembrane segments spans residues I15 to I35 and F58 to F78.

It belongs to the ATPase C chain family. In terms of assembly, F-type ATPases have 2 components, F(1) - the catalytic core - and F(0) - the membrane proton channel. F(1) has five subunits: alpha(3), beta(3), gamma(1), delta(1), epsilon(1). F(0) has three main subunits: a(1), b(2) and c(10-14). The alpha and beta chains form an alternating ring which encloses part of the gamma chain. F(1) is attached to F(0) by a central stalk formed by the gamma and epsilon chains, while a peripheral stalk is formed by the delta and b chains.

It localises to the cell inner membrane. In terms of biological role, f(1)F(0) ATP synthase produces ATP from ADP in the presence of a proton or sodium gradient. F-type ATPases consist of two structural domains, F(1) containing the extramembraneous catalytic core and F(0) containing the membrane proton channel, linked together by a central stalk and a peripheral stalk. During catalysis, ATP synthesis in the catalytic domain of F(1) is coupled via a rotary mechanism of the central stalk subunits to proton translocation. Functionally, key component of the F(0) channel; it plays a direct role in translocation across the membrane. A homomeric c-ring of between 10-14 subunits forms the central stalk rotor element with the F(1) delta and epsilon subunits. This chain is ATP synthase subunit c, found in Hydrogenovibrio crunogenus (strain DSM 25203 / XCL-2) (Thiomicrospira crunogena).